The sequence spans 275 residues: Elongation factor Ts (275 aa).

The segment at 80-83 (TDFV) is involved in Mg(2+) ion dislocation from EF-Tu.

This sequence belongs to the EF-Ts family.

It localises to the cytoplasm. Associates with the EF-Tu.GDP complex and induces the exchange of GDP to GTP. It remains bound to the aminoacyl-tRNA.EF-Tu.GTP complex up to the GTP hydrolysis stage on the ribosome. In Clavibacter michiganensis subsp. michiganensis (strain NCPPB 382), this protein is Elongation factor Ts.